Here is a 299-residue protein sequence, read N- to C-terminus: tRNA pseudouridine synthase B (299 aa).

Aspartate 38 functions as the Nucleophile in the catalytic mechanism.

Belongs to the pseudouridine synthase TruB family. Type 1 subfamily.

The catalysed reaction is uridine(55) in tRNA = pseudouridine(55) in tRNA. Its function is as follows. Responsible for synthesis of pseudouridine from uracil-55 in the psi GC loop of transfer RNAs. The protein is tRNA pseudouridine synthase B of Pediococcus pentosaceus (strain ATCC 25745 / CCUG 21536 / LMG 10740 / 183-1w).